A 620-amino-acid polypeptide reads, in one-letter code: Glutathione-regulated potassium-efflux system protein KefC (620 aa).

The next 12 helical transmembrane spans lie at 4 to 24 (HTLI…PIAV), 26 to 46 (LGLG…PWGL), 54 to 74 (SILH…GLEL), 90 to 110 (GALQ…LLGL), 114 to 134 (VAEL…MQAM), 149 to 169 (FAVL…IPLL), 178 to 198 (MGAF…VVLL), 218 to 238 (VFSA…EEVG), 270 to 290 (GLLL…GTLL), 294 to 314 (LRIV…LWLI), 327 to 347 (WFAV…GAAQ), and 359 to 379 (SLTL…VILN). One can recognise an RCK N-terminal domain in the interval 399–518 (QPRVIIAGFG…AGVEKPERET (120 aa)). Positions 597-620 (GWQGTEEGKHTGNMADEPETKPSS) are disordered.

The protein belongs to the monovalent cation:proton antiporter 2 (CPA2) transporter (TC 2.A.37) family. KefC subfamily. As to quaternary structure, homodimer. Interacts with the regulatory subunit KefF.

Its subcellular location is the cell inner membrane. Functionally, pore-forming subunit of a potassium efflux system that confers protection against electrophiles. Catalyzes K(+)/H(+) antiport. This chain is Glutathione-regulated potassium-efflux system protein KefC, found in Escherichia coli O7:K1 (strain IAI39 / ExPEC).